A 392-amino-acid chain; its full sequence is Elongation factor Tu-3 (392 aa).

Residues 10–206 (KPHLNIGTMG…AVDTYVPMPE (197 aa)) enclose the tr-type G domain. A G1 region spans residues 19–26 (GHVDHGKT). 19 to 26 (GHVDHGKT) provides a ligand contact to GTP. Thr-26 contacts Mg(2+). Residues 63-67 (GITIN) form a G2 region. The segment at 84 to 87 (DMPG) is G3. GTP-binding positions include 84–88 (DMPGH) and 139–142 (NKAD). Residues 139 to 142 (NKAD) are G4. The interval 176 to 178 (SGL) is G5.

Belongs to the TRAFAC class translation factor GTPase superfamily. Classic translation factor GTPase family. EF-Tu/EF-1A subfamily. Monomer.

It is found in the cytoplasm. It catalyses the reaction GTP + H2O = GDP + phosphate + H(+). Its function is as follows. GTP hydrolase that promotes the GTP-dependent binding of aminoacyl-tRNA to the A-site of ribosomes during protein biosynthesis. In Streptomyces coelicolor (strain ATCC BAA-471 / A3(2) / M145), this protein is Elongation factor Tu-3.